The sequence spans 261 residues: MLIIFKDLNLVKTNNCQIIGWWKQLSLPQKTFLSFIPLFLVTSAFVLTGIVESLLTFGTIIEQIDKFTDQTNVMLLIYAVIYTFNPKSWLLKNQQFFLSALAYILFTFIGYNLILSIAGIAYKSTNPYKLTSSIFLHVIAPIAFFIASFIKIKHEKDVNINMFFKSLLLFMIYPLIYGLYLVTIPYVRHYLFNGRPSTYTIYGSITNTKNNPFAWLVVFAVLFIYFPLSYLAIYLLQLKLIKKAIQPQFNLPFTLNKWKQK.

The next 6 helical transmembrane spans lie at 31–51 (TFLS…TGIV), 71–91 (TNVM…SWLL), 101–121 (LAYI…AGIA), 130–150 (LTSS…ASFI), 167–187 (LLLF…IPYV), and 213–233 (FAWL…YLAI).

It is found in the cell membrane. This is an uncharacterized protein from Mycoplasma genitalium (strain ATCC 33530 / DSM 19775 / NCTC 10195 / G37) (Mycoplasmoides genitalium).